We begin with the raw amino-acid sequence, 475 residues long: Siroheme synthase (475 aa).

The segment at 1-204 is precorrin-2 dehydrogenase /sirohydrochlorin ferrochelatase; that stretch reads MDYLPVFLNI…GRDQAAQDYL (204 aa). NAD(+) is bound by residues 22–23 and 43–44; these read EI and PA. S129 is modified (phosphoserine). Positions 218 to 475 are uroporphyrinogen-III C-methyltransferase; it reads GEVYLVGAGP…MGTSSGPGYP (258 aa). P227 provides a ligand contact to S-adenosyl-L-methionine. The active-site Proton acceptor is the D250. Catalysis depends on K272, which acts as the Proton donor. S-adenosyl-L-methionine-binding positions include 303 to 305, I308, 333 to 334, M385, and G414; these read GGD and TA.

In the N-terminal section; belongs to the precorrin-2 dehydrogenase / sirohydrochlorin ferrochelatase family. It in the C-terminal section; belongs to the precorrin methyltransferase family.

It catalyses the reaction uroporphyrinogen III + 2 S-adenosyl-L-methionine = precorrin-2 + 2 S-adenosyl-L-homocysteine + H(+). It carries out the reaction precorrin-2 + NAD(+) = sirohydrochlorin + NADH + 2 H(+). The catalysed reaction is siroheme + 2 H(+) = sirohydrochlorin + Fe(2+). It participates in cofactor biosynthesis; adenosylcobalamin biosynthesis; precorrin-2 from uroporphyrinogen III: step 1/1. The protein operates within cofactor biosynthesis; adenosylcobalamin biosynthesis; sirohydrochlorin from precorrin-2: step 1/1. It functions in the pathway porphyrin-containing compound metabolism; siroheme biosynthesis; precorrin-2 from uroporphyrinogen III: step 1/1. Its pathway is porphyrin-containing compound metabolism; siroheme biosynthesis; siroheme from sirohydrochlorin: step 1/1. It participates in porphyrin-containing compound metabolism; siroheme biosynthesis; sirohydrochlorin from precorrin-2: step 1/1. Its function is as follows. Multifunctional enzyme that catalyzes the SAM-dependent methylations of uroporphyrinogen III at position C-2 and C-7 to form precorrin-2 via precorrin-1. Then it catalyzes the NAD-dependent ring dehydrogenation of precorrin-2 to yield sirohydrochlorin. Finally, it catalyzes the ferrochelation of sirohydrochlorin to yield siroheme. The chain is Siroheme synthase from Nitrosomonas europaea (strain ATCC 19718 / CIP 103999 / KCTC 2705 / NBRC 14298).